A 207-amino-acid polypeptide reads, in one-letter code: Small ribosomal subunit protein uS3c (207 aa).

In terms of domain architecture, KH type-2 spans 39 to 109 (IRDYIFTNLL…QLKINIIDVT (71 aa)).

It belongs to the universal ribosomal protein uS3 family. In terms of assembly, part of the 30S ribosomal subunit.

The protein resides in the plastid. Its subcellular location is the chloroplast. This chain is Small ribosomal subunit protein uS3c (rps3), found in Cyanidium caldarium (Red alga).